The chain runs to 55 residues: Photosystem I reaction center subunit IX (55 aa).

A helical membrane pass occupies residues 7 to 27 (YLSVAPVLSTLWFGSLAGLLI).

Belongs to the PsaJ family.

It is found in the plastid. Its subcellular location is the chloroplast thylakoid membrane. May help in the organization of the PsaE and PsaF subunits. The chain is Photosystem I reaction center subunit IX from Gossypium barbadense (Sea Island cotton).